The following is a 262-amino-acid chain: tRNA pseudouridine synthase A (262 aa).

D52 acts as the Nucleophile in catalysis. Residue Y103 coordinates substrate.

This sequence belongs to the tRNA pseudouridine synthase TruA family.

It carries out the reaction uridine(38/39/40) in tRNA = pseudouridine(38/39/40) in tRNA. Formation of pseudouridine at positions 38, 39 and 40 in the anticodon stem and loop of transfer RNAs. This is tRNA pseudouridine synthase A from Methanococcus maripaludis (strain C6 / ATCC BAA-1332).